The sequence spans 84 residues: Small ribosomal subunit protein uS17 (84 aa).

The protein belongs to the universal ribosomal protein uS17 family. In terms of assembly, part of the 30S ribosomal subunit.

One of the primary rRNA binding proteins, it binds specifically to the 5'-end of 16S ribosomal RNA. This chain is Small ribosomal subunit protein uS17, found in Legionella pneumophila (strain Paris).